We begin with the raw amino-acid sequence, 694 residues long: Elongation factor G 2 (694 aa).

The tr-type G domain occupies 6-282 (SKLRNIGISA…GVVDYLPDPT (277 aa)). Residues 15 to 22 (AHIDSGKT), 82 to 86 (DTPGH), and 136 to 139 (NKCD) contribute to the GTP site.

Belongs to the TRAFAC class translation factor GTPase superfamily. Classic translation factor GTPase family. EF-G/EF-2 subfamily.

It localises to the cytoplasm. Catalyzes the GTP-dependent ribosomal translocation step during translation elongation. During this step, the ribosome changes from the pre-translocational (PRE) to the post-translocational (POST) state as the newly formed A-site-bound peptidyl-tRNA and P-site-bound deacylated tRNA move to the P and E sites, respectively. Catalyzes the coordinated movement of the two tRNA molecules, the mRNA and conformational changes in the ribosome. The chain is Elongation factor G 2 from Anaeromyxobacter dehalogenans (strain 2CP-C).